Reading from the N-terminus, the 452-residue chain is tRNA modification GTPase MnmE (452 aa).

Residues Arg24, Glu81, and Lys120 each contribute to the (6S)-5-formyl-5,6,7,8-tetrahydrofolate site. The region spanning 217–373 (GIKTAIVGKT…LIMKIEQMHI (157 aa)) is the TrmE-type G domain. Asn227 contacts K(+). Residues 227–232 (NVGKSS), 246–252 (TDIHGTT), and 271–274 (DTAG) contribute to the GTP site. Mg(2+) is bound at residue Ser231. Positions 246, 248, and 251 each coordinate K(+). Thr252 provides a ligand contact to Mg(2+). Lys452 provides a ligand contact to (6S)-5-formyl-5,6,7,8-tetrahydrofolate.

Belongs to the TRAFAC class TrmE-Era-EngA-EngB-Septin-like GTPase superfamily. TrmE GTPase family. As to quaternary structure, homodimer. Heterotetramer of two MnmE and two MnmG subunits. Requires K(+) as cofactor.

It is found in the cytoplasm. Its function is as follows. Exhibits a very high intrinsic GTPase hydrolysis rate. Involved in the addition of a carboxymethylaminomethyl (cmnm) group at the wobble position (U34) of certain tRNAs, forming tRNA-cmnm(5)s(2)U34. This is tRNA modification GTPase MnmE from Mesoplasma florum (strain ATCC 33453 / NBRC 100688 / NCTC 11704 / L1) (Acholeplasma florum).